The sequence spans 352 residues: DNA polymerase IV (352 aa).

The region spanning 6 to 186 is the UmuC domain; it reads IIHIDMDAFY…LPLGKIPGVG (181 aa). Mg(2+) is bound by residues aspartate 10 and aspartate 104. Glutamate 105 is a catalytic residue.

It belongs to the DNA polymerase type-Y family. As to quaternary structure, monomer. It depends on Mg(2+) as a cofactor.

It localises to the cytoplasm. It carries out the reaction DNA(n) + a 2'-deoxyribonucleoside 5'-triphosphate = DNA(n+1) + diphosphate. In terms of biological role, poorly processive, error-prone DNA polymerase involved in untargeted mutagenesis. Copies undamaged DNA at stalled replication forks, which arise in vivo from mismatched or misaligned primer ends. These misaligned primers can be extended by PolIV. Exhibits no 3'-5' exonuclease (proofreading) activity. May be involved in translesional synthesis, in conjunction with the beta clamp from PolIII. The protein is DNA polymerase IV of Neisseria meningitidis serogroup A / serotype 4A (strain DSM 15465 / Z2491).